We begin with the raw amino-acid sequence, 92 residues long: Small ribosomal subunit protein bS20 (92 aa).

The disordered stretch occupies residues 1 to 23 (MANSPSAKKRAIQAEKRRSHNAS).

This sequence belongs to the bacterial ribosomal protein bS20 family.

In terms of biological role, binds directly to 16S ribosomal RNA. This chain is Small ribosomal subunit protein bS20, found in Stutzerimonas stutzeri (strain A1501) (Pseudomonas stutzeri).